A 428-amino-acid chain; its full sequence is Enolase (428 aa).

Position 162 (glutamine 162) interacts with (2R)-2-phosphoglycerate. Catalysis depends on glutamate 204, which acts as the Proton donor. Positions 241, 283, and 310 each coordinate Mg(2+). The (2R)-2-phosphoglycerate site is built by lysine 335, arginine 364, serine 365, and lysine 386. The active-site Proton acceptor is lysine 335.

The protein belongs to the enolase family. Requires Mg(2+) as cofactor.

It is found in the cytoplasm. The protein resides in the secreted. It localises to the cell surface. It catalyses the reaction (2R)-2-phosphoglycerate = phosphoenolpyruvate + H2O. The protein operates within carbohydrate degradation; glycolysis; pyruvate from D-glyceraldehyde 3-phosphate: step 4/5. Functionally, catalyzes the reversible conversion of 2-phosphoglycerate (2-PG) into phosphoenolpyruvate (PEP). It is essential for the degradation of carbohydrates via glycolysis. The sequence is that of Enolase from Rhodococcus erythropolis (strain PR4 / NBRC 100887).